A 371-amino-acid chain; its full sequence is Peptide chain release factor 2 (371 aa).

The residue at position 247 (Gln247) is an N5-methylglutamine.

Belongs to the prokaryotic/mitochondrial release factor family. Methylated by PrmC. Methylation increases the termination efficiency of RF2.

The protein resides in the cytoplasm. Functionally, peptide chain release factor 2 directs the termination of translation in response to the peptide chain termination codons UGA and UAA. This chain is Peptide chain release factor 2, found in Caulobacter vibrioides (strain ATCC 19089 / CIP 103742 / CB 15) (Caulobacter crescentus).